Consider the following 211-residue polypeptide: Imidazole glycerol phosphate synthase subunit HisH (211 aa).

Residues 1-211 form the Glutamine amidotransferase type-1 domain; that stretch reads MIGIIDYGMG…ASIIEGKGSM (211 aa). The Nucleophile role is filled by C79. Catalysis depends on residues H186 and E188.

Heterodimer of HisH and HisF.

It localises to the cytoplasm. The catalysed reaction is 5-[(5-phospho-1-deoxy-D-ribulos-1-ylimino)methylamino]-1-(5-phospho-beta-D-ribosyl)imidazole-4-carboxamide + L-glutamine = D-erythro-1-(imidazol-4-yl)glycerol 3-phosphate + 5-amino-1-(5-phospho-beta-D-ribosyl)imidazole-4-carboxamide + L-glutamate + H(+). The enzyme catalyses L-glutamine + H2O = L-glutamate + NH4(+). It functions in the pathway amino-acid biosynthesis; L-histidine biosynthesis; L-histidine from 5-phospho-alpha-D-ribose 1-diphosphate: step 5/9. Functionally, IGPS catalyzes the conversion of PRFAR and glutamine to IGP, AICAR and glutamate. The HisH subunit catalyzes the hydrolysis of glutamine to glutamate and ammonia as part of the synthesis of IGP and AICAR. The resulting ammonia molecule is channeled to the active site of HisF. In Geobacillus sp. (strain WCH70), this protein is Imidazole glycerol phosphate synthase subunit HisH.